We begin with the raw amino-acid sequence, 129 residues long: Protein BUNDLE SHEATH DEFECTIVE 2, chloroplastic (129 aa).

A chloroplast-targeting transit peptide spans 1–43 (MAATASLTTTAPSPPALLKASAPLLISFRPVSRHCKNLCIKTK). Residues 49-123 (QSAKKHQKVK…AGFLGGFLST (75 aa)) form a CR-type zinc finger. Positions 62, 65, 68, 73, 76, 97, 100, 105, 108, and 111 each coordinate Zn(2+).

The protein belongs to the BSD2 chaperone family. In terms of assembly, interacts with the RuBisCo large subunit (RbcL) assembled as an intermediate complex made of eight RbcL and eight BSD2 subunits. In terms of tissue distribution, expressed in shoot tissues, in both bundle sheath and mesophyll cells.

The protein localises to the plastid. Its subcellular location is the chloroplast stroma. Chloroplast chaperone required for RuBisCo complex biogenesis and translational regulation of the RuBisCo large subunit (RbcL). Stabilizes an end-state assembly intermediate of eight RbcL subunits until the small subunits (RBCSs) become available to produce a complete stable RuBisCo complex containing eight small and eight large subunits. Involved in the differentiation of bundle sheath cells, especially chloroplast structure. The sequence is that of Protein BUNDLE SHEATH DEFECTIVE 2, chloroplastic from Zea mays (Maize).